Reading from the N-terminus, the 203-residue chain is Glycerol-3-phosphate acyltransferase (203 aa).

The next 5 membrane-spanning stretches (helical) occupy residues 4 to 24 (IAYL…AVIF), 56 to 76 (LGVL…GFYL), 80 to 100 (ISVI…PVFF), 115 to 135 (IIPM…FVFL), and 149 to 169 (LIVP…VALV).

The protein belongs to the PlsY family. Probably interacts with PlsX.

The protein resides in the cell inner membrane. The catalysed reaction is an acyl phosphate + sn-glycerol 3-phosphate = a 1-acyl-sn-glycero-3-phosphate + phosphate. The protein operates within lipid metabolism; phospholipid metabolism. Its function is as follows. Catalyzes the transfer of an acyl group from acyl-phosphate (acyl-PO(4)) to glycerol-3-phosphate (G3P) to form lysophosphatidic acid (LPA). This enzyme utilizes acyl-phosphate as fatty acyl donor, but not acyl-CoA or acyl-ACP. The protein is Glycerol-3-phosphate acyltransferase of Glaesserella parasuis serovar 5 (strain SH0165) (Haemophilus parasuis).